Reading from the N-terminus, the 155-residue chain is Small ribosomal subunit protein uS7 (155 aa).

This sequence belongs to the universal ribosomal protein uS7 family. As to quaternary structure, part of the 30S ribosomal subunit. Contacts proteins S9 and S11.

Its function is as follows. One of the primary rRNA binding proteins, it binds directly to 16S rRNA where it nucleates assembly of the head domain of the 30S subunit. Is located at the subunit interface close to the decoding center, probably blocks exit of the E-site tRNA. The polypeptide is Small ribosomal subunit protein uS7 (Sulfurimonas denitrificans (strain ATCC 33889 / DSM 1251) (Thiomicrospira denitrificans (strain ATCC 33889 / DSM 1251))).